The chain runs to 394 residues: NAD(P)H-quinone oxidoreductase subunit H (394 aa).

The protein belongs to the complex I 49 kDa subunit family. As to quaternary structure, NDH-1 can be composed of about 15 different subunits; different subcomplexes with different compositions have been identified which probably have different functions.

It localises to the cellular thylakoid membrane. The enzyme catalyses a plastoquinone + NADH + (n+1) H(+)(in) = a plastoquinol + NAD(+) + n H(+)(out). It carries out the reaction a plastoquinone + NADPH + (n+1) H(+)(in) = a plastoquinol + NADP(+) + n H(+)(out). Its function is as follows. NDH-1 shuttles electrons from an unknown electron donor, via FMN and iron-sulfur (Fe-S) centers, to quinones in the respiratory and/or the photosynthetic chain. The immediate electron acceptor for the enzyme in this species is believed to be plastoquinone. Couples the redox reaction to proton translocation, and thus conserves the redox energy in a proton gradient. Cyanobacterial NDH-1 also plays a role in inorganic carbon-concentration. The sequence is that of NAD(P)H-quinone oxidoreductase subunit H from Prochlorococcus marinus (strain MIT 9303).